The following is a 419-amino-acid chain: G-protein coupled receptor 151 (419 aa).

Residues 1–41 (MLAAAFADSNSSSMNVSFAHLHFAGGYLPSDSQDWRTIIPA) lie on the Extracellular side of the membrane. Residues N10 and N15 are each glycosylated (N-linked (GlcNAc...) asparagine). Residues 42–62 (LLVAVCLVGFVGNLCVIGILL) form a helical membrane-spanning segment. Residues 63–71 (HNAWKGKPS) lie on the Cytoplasmic side of the membrane. The chain crosses the membrane as a helical span at residues 72–92 (MIHSLILNLSLADLSLLLFSA). Residues 93–116 (PIRATAYSKSVWDLGWFVCKSSDW) lie on the Extracellular side of the membrane. Cysteines 111 and 187 form a disulfide. The helical transmembrane segment at 117–137 (FIHTCMAAKSLTIVVVAKVCF) threads the bilayer. The Cytoplasmic segment spans residues 138–153 (MYASDPAKQVSIHNYT). A helical transmembrane segment spans residues 154–174 (IWSVLVAIWTVASLLPLPEWF). Over 175-201 (FSTIRHHEGVEMCLVDVPAVAEEFMSM) the chain is Extracellular. A helical membrane pass occupies residues 202–222 (FGKLYPLLAFGLPLFFASFYF). Over 223–252 (WRAYDQCKKRGTKTQNLRNQIRSKQVTVML) the chain is Cytoplasmic. A helical transmembrane segment spans residues 253–273 (LSIAIISALLWLPEWVAWLWV). The Extracellular portion of the chain corresponds to 274-286 (WHLKAAGPAPPQG). The helical transmembrane segment at 287-307 (FIALSQVLMFSISSANPLIFL) threads the bilayer. Residues 308–419 (VMSEEFREGL…EDQETGEGVK (112 aa)) are Cytoplasmic-facing. A disordered region spans residues 330 to 419 (PTVSESQETP…EDQETGEGVK (90 aa)). Positions 332–341 (VSESQETPAG) are enriched in polar residues. The span at 410–419 (EDQETGEGVK) shows a compositional bias: acidic residues.

This sequence belongs to the G-protein coupled receptor 1 family. As to expression, high expression in the spinal cord.

It localises to the cell membrane. In terms of biological role, proton-sensing G-protein coupled receptor. This is G-protein coupled receptor 151 (GPR151) from Homo sapiens (Human).